A 147-amino-acid polypeptide reads, in one-letter code: Small ribosomal subunit protein bS6 (147 aa).

The interval 103–147 (AARMAANLPSFPEDEDTEEKGSAPLAREEEGIGEEAQTDEAEDKE) is disordered. The span at 133 to 147 (GIGEEAQTDEAEDKE) shows a compositional bias: acidic residues.

It belongs to the bacterial ribosomal protein bS6 family.

In terms of biological role, binds together with bS18 to 16S ribosomal RNA. The polypeptide is Small ribosomal subunit protein bS6 (Syntrophobacter fumaroxidans (strain DSM 10017 / MPOB)).